Here is a 470-residue protein sequence, read N- to C-terminus: Hydroxymethylglutaryl-CoA synthase (470 aa).

The active-site Proton donor/acceptor is the Glu-100. Cys-134 functions as the Acyl-thioester intermediate in the catalytic mechanism. Positions 134, 176, 225, 269, 278, 348, and 382 each coordinate (3S)-3-hydroxy-3-methylglutaryl-CoA. His-269 functions as the Proton donor/acceptor in the catalytic mechanism.

It belongs to the thiolase-like superfamily. HMG-CoA synthase family.

The enzyme catalyses acetoacetyl-CoA + acetyl-CoA + H2O = (3S)-3-hydroxy-3-methylglutaryl-CoA + CoA + H(+). The protein operates within metabolic intermediate biosynthesis; (R)-mevalonate biosynthesis; (R)-mevalonate from acetyl-CoA: step 2/3. Its function is as follows. Hydroxymethylglutaryl-CoA synthase; part of the first module of ergosterol biosynthesis pathway that includes the early steps of the pathway, conserved across all eukaryotes, and which results in the formation of mevalonate from acetyl-coenzyme A (acetyl-CoA). This module also plays a key role in the biosynthesis of triterpenes such as ganoderic acids (GA), a group of highly oxygenated lanostane-type triterpenoids which are well recognized as a main group of unique bioactive compounds in the medicinal mushroom Ganoderma lucidum. In this module, the acetyl-CoA acetyltransferase catalyzes the formation of acetoacetyl-CoA. The hydroxymethylglutaryl-CoA synthase HMGS then condenses acetyl-CoA with acetoacetyl-CoA to form HMG-CoA. The rate-limiting step of the early module is the reduction to mevalonate by the 3-hydroxy-3-methylglutaryl-coenzyme A (HMG-CoA) reductase. This is Hydroxymethylglutaryl-CoA synthase from Ganoderma lucidum (Ling zhi medicinal fungus).